The following is a 303-amino-acid chain: Hydroxyethylthiazole kinase (303 aa).

Polar residues predominate over residues 1–15 (MTTASTTPNSDTSNL). Positions 1-23 (MTTASTTPNSDTSNLHEVAPDDP) are disordered. Methionine 67 contributes to the substrate binding site. Arginine 142 and serine 206 together coordinate ATP. Glycine 233 lines the substrate pocket.

This sequence belongs to the Thz kinase family. It depends on Mg(2+) as a cofactor.

The catalysed reaction is 5-(2-hydroxyethyl)-4-methylthiazole + ATP = 4-methyl-5-(2-phosphooxyethyl)-thiazole + ADP + H(+). The protein operates within cofactor biosynthesis; thiamine diphosphate biosynthesis; 4-methyl-5-(2-phosphoethyl)-thiazole from 5-(2-hydroxyethyl)-4-methylthiazole: step 1/1. In terms of biological role, catalyzes the phosphorylation of the hydroxyl group of 4-methyl-5-beta-hydroxyethylthiazole (THZ). This chain is Hydroxyethylthiazole kinase, found in Bifidobacterium animalis subsp. lactis (strain AD011).